The primary structure comprises 197 residues: Glycerol-3-phosphate acyltransferase (197 aa).

5 helical membrane passes run 6–26 (LFIVLLLLSYLIGSISTAIIV), 58–78 (AITLIGDGLKGAIPVLIAHYL), 82–102 (MLNVTWVILVTFLGHVYPIFF), 116–136 (ALLALSYLTGLSFIITWVFVA), and 157–177 (FYLITNNLASTYVIILICLWI).

This sequence belongs to the PlsY family. In terms of assembly, probably interacts with PlsX.

The protein localises to the cell inner membrane. It carries out the reaction an acyl phosphate + sn-glycerol 3-phosphate = a 1-acyl-sn-glycero-3-phosphate + phosphate. It functions in the pathway lipid metabolism; phospholipid metabolism. In terms of biological role, catalyzes the transfer of an acyl group from acyl-phosphate (acyl-PO(4)) to glycerol-3-phosphate (G3P) to form lysophosphatidic acid (LPA). This enzyme utilizes acyl-phosphate as fatty acyl donor, but not acyl-CoA or acyl-ACP. The polypeptide is Glycerol-3-phosphate acyltransferase (Ruthia magnifica subsp. Calyptogena magnifica).